The sequence spans 2603 residues: Protein SABRE (2603 aa).

A signal peptide spans 1–35; the sequence is MAASPAKFFFGFLIVSIVLWMIFMLFAWMLSRVLG. Asn196 carries an N-linked (GlcNAc...) asparagine glycan. Residues 259-287 are disordered; the sequence is FPKSKQSSASLRSDEVRTSATAASSAKKP. Asn331, Asn486, Asn597, Asn807, Asn867, Asn887, Asn1154, Asn1249, Asn1280, and Asn1408 each carry an N-linked (GlcNAc...) asparagine glycan. Residues 786-814 are disordered; sequence PESGCNKGISSVKDGGPSEKINQSNSVNK. The interval 1416-1436 is disordered; the sequence is FHQSPSSTEHPTDVGTVYSSQ. Asn1492 and Asn1659 each carry an N-linked (GlcNAc...) asparagine glycan. Disordered regions lie at residues 1656–1676 and 1717–1777; these read EFEN…DDDG and EPPK…DDIG. Residues 1731-1748 are compositionally biased toward basic and acidic residues; the sequence is KIHEENQKESCPETHQGE. Residues 1749–1766 are compositionally biased toward polar residues; that stretch reads MSRSSASPGRNLPSSPSH. The stretch at 1995–2023 forms a coiled coil; the sequence is VEEVELAKINLEEKERERKLLLDDIRKLS. A glycan (N-linked (GlcNAc...) asparagine) is linked at Asn2333. Disordered stretches follow at residues 2339 to 2380, 2448 to 2479, and 2554 to 2603; these read EQQE…RPRK, GKKF…KPDQ, and IRRH…DFRE. Basic and acidic residues predominate over residues 2343-2380; it reads DFSKQKVKEIKPVKSGRSSHEEKKAGKSHEEKKSRPRK. Residue Asn2467 is glycosylated (N-linked (GlcNAc...) asparagine). The span at 2554–2565 shows a compositional bias: basic residues; it reads IRRHTKKFRPRS. A compositionally biased stretch (polar residues) spans 2566-2583; sequence QRGSTSQQRESLPSSPIE. Positions 2586 to 2603 are enriched in low complexity; that stretch reads PFESGYSSGSSPYEDFRE.

It belongs to the SABRE family. As to expression, highest levels in leaves, also expressed in leaves, flowers, and siliques, and, to a lower extent, in roots and stems.

The protein localises to the secreted. Its subcellular location is the golgi apparatus. May be involved in membrane trafficking. Required for cell expansion, especially in root cortex, probably by counteracting the action of ethylene in promoting cells radial expansion. Involved in female organ development. Antagonistically interacts with ethylene signaling to regulate plant responses to Pi starvation. The polypeptide is Protein SABRE (Arabidopsis thaliana (Mouse-ear cress)).